The sequence spans 257 residues: ATP synthase subunit a (257 aa).

Transmembrane regions (helical) follow at residues Ile-34–Leu-54, Tyr-93–Val-113, His-122–Phe-142, Phe-149–Ile-169, Ala-187–Met-207, and Gly-210–Leu-230.

It belongs to the ATPase A chain family. In terms of assembly, F-type ATPases have 2 components, CF(1) - the catalytic core - and CF(0) - the membrane proton channel. CF(1) has five subunits: alpha(3), beta(3), gamma(1), delta(1), epsilon(1). CF(0) has three main subunits: a, b and c.

It is found in the mitochondrion inner membrane. Mitochondrial membrane ATP synthase (F(1)F(0) ATP synthase or Complex V) produces ATP from ADP in the presence of a proton gradient across the membrane which is generated by electron transport complexes of the respiratory chain. F-type ATPases consist of two structural domains, F(1) - containing the extramembraneous catalytic core and F(0) - containing the membrane proton channel, linked together by a central stalk and a peripheral stalk. During catalysis, ATP synthesis in the catalytic domain of F(1) is coupled via a rotary mechanism of the central stalk subunits to proton translocation. Key component of the proton channel; it may play a direct role in the translocation of protons across the membrane. The protein is ATP synthase subunit a (ATP6) of Cochliobolus heterostrophus (Southern corn leaf blight fungus).